A 195-amino-acid chain; its full sequence is Imidazoleglycerol-phosphate dehydratase (195 aa).

Belongs to the imidazoleglycerol-phosphate dehydratase family.

Its subcellular location is the cytoplasm. The enzyme catalyses D-erythro-1-(imidazol-4-yl)glycerol 3-phosphate = 3-(imidazol-4-yl)-2-oxopropyl phosphate + H2O. The protein operates within amino-acid biosynthesis; L-histidine biosynthesis; L-histidine from 5-phospho-alpha-D-ribose 1-diphosphate: step 6/9. The protein is Imidazoleglycerol-phosphate dehydratase of Thiobacillus denitrificans (strain ATCC 25259 / T1).